Here is a 310-residue protein sequence, read N- to C-terminus: Probable endonuclease 4 (310 aa).

A disordered region spans residues 1–31; it reads MNNQQSRGALGTSGATPDLPDATPGLSRNPV. The Zn(2+) site is built by His94, His134, Glu173, Asp207, His210, His244, Asp257, His259, and Glu289.

Belongs to the AP endonuclease 2 family. Zn(2+) serves as cofactor.

It carries out the reaction Endonucleolytic cleavage to 5'-phosphooligonucleotide end-products.. Its function is as follows. Endonuclease IV plays a role in DNA repair. It cleaves phosphodiester bonds at apurinic or apyrimidinic (AP) sites, generating a 3'-hydroxyl group and a 5'-terminal sugar phosphate. This chain is Probable endonuclease 4, found in Streptomyces avermitilis (strain ATCC 31267 / DSM 46492 / JCM 5070 / NBRC 14893 / NCIMB 12804 / NRRL 8165 / MA-4680).